A 132-amino-acid polypeptide reads, in one-letter code: Small ribosomal subunit protein uS11 (132 aa).

The protein belongs to the universal ribosomal protein uS11 family. In terms of assembly, part of the 30S ribosomal subunit. Interacts with proteins S7 and S18. Binds to IF-3.

Located on the platform of the 30S subunit, it bridges several disparate RNA helices of the 16S rRNA. Forms part of the Shine-Dalgarno cleft in the 70S ribosome. The protein is Small ribosomal subunit protein uS11 of Lachnoclostridium phytofermentans (strain ATCC 700394 / DSM 18823 / ISDg) (Clostridium phytofermentans).